A 538-amino-acid polypeptide reads, in one-letter code: Probable ribonuclease 3 (538 aa).

2 consecutive RNase III domains span residues 24-149 and 238-381; these read IKSY…LNFG and ASQM…EGYL. Residues 408 to 477 enclose the DRBM domain; sequence LISQNIEVLH…NYKDLILQLY (70 aa).

It belongs to the ribonuclease III family.

The enzyme catalyses Endonucleolytic cleavage to 5'-phosphomonoester.. Digests double-stranded RNA. This chain is Probable ribonuclease 3, found in Acanthamoeba polyphaga (Amoeba).